The primary structure comprises 213 residues: Endoplasmic reticulum vesicle protein 25 (213 aa).

An N-terminal signal peptide occupies residues 1–20 (MILRIPSLLYLFTLLTAVYA). Residues 21 to 181 (VKFDLTSDRN…TNESTNQRVK (161 aa)) lie on the Lumenal side of the membrane. Residues 33–122 (PKCIWNFASA…VRSVELDVDI (90 aa)) form the GOLD domain. The chain crosses the membrane as a helical span at residues 182–202 (VFSVLIICCTIGLGVWQLLHL). The Cytoplasmic portion of the chain corresponds to 203-213 (RSFFKRKYLID).

This sequence belongs to the EMP24/GP25L family.

The protein localises to the endoplasmic reticulum membrane. It localises to the golgi apparatus membrane. In terms of biological role, constituent of COPII-coated endoplasmic reticulum-derived transport vesicles. Required for efficient transport of a subset of secretory proteins to the Golgi. Facilitates retrograde transport from the Golgi to the endoplasmic reticulum. The polypeptide is Endoplasmic reticulum vesicle protein 25 (ERV25) (Cryptococcus neoformans var. neoformans serotype D (strain JEC21 / ATCC MYA-565) (Filobasidiella neoformans)).